Consider the following 466-residue polypeptide: Vacuolar protein sorting-associated protein 30 (466 aa).

Residues 35-55 (SETNTDNSDNNKHNGENDRNI) form a disordered region. Basic and acidic residues predominate over residues 43-53 (DNNKHNGENDR). Residues 149-258 (DTLLEKLKEE…QMEHLSFIKD (110 aa)) adopt a coiled-coil conformation. The segment at 279 to 463 (LNIYNETFRI…LAFSTSRINK (185 aa)) is BARA. A required for membrane-association, autophagic function during starvation and normal autophagosome morphology region spans residues 439 to 464 (WTTACKFLLTNIKWLLAFSTSRINKA).

This sequence belongs to the beclin family. Component of the autophagy-specific VPS34 PI3-kinase complex I; and of the VPS34 PI3-kinase complex II.

Its subcellular location is the endosome membrane. The protein resides in the vacuole membrane. It is found in the preautophagosomal structure membrane. Its function is as follows. Required for cytoplasm to vacuole transport (Cvt), autophagy, nucleophagy, and mitophagy, as a part of the autophagy-specific VPS34 PI3-kinase complex I. This complex is essential to recruit the ATG8-phosphatidylinositol conjugate and the ATG12-ATG5 conjugate to the pre-autophagosomal structure. Also involved in endosome-to-Golgi retrograde transport as part of the VPS34 PI3-kinase complex II. The sequence is that of Vacuolar protein sorting-associated protein 30 from Kluyveromyces marxianus (strain DMKU3-1042 / BCC 29191 / NBRC 104275) (Yeast).